A 100-amino-acid polypeptide reads, in one-letter code: Large ribosomal subunit protein uL23 (100 aa).

The protein belongs to the universal ribosomal protein uL23 family. Part of the 50S ribosomal subunit. Contacts protein L29, and trigger factor when it is bound to the ribosome.

In terms of biological role, one of the early assembly proteins it binds 23S rRNA. One of the proteins that surrounds the polypeptide exit tunnel on the outside of the ribosome. Forms the main docking site for trigger factor binding to the ribosome. The sequence is that of Large ribosomal subunit protein uL23 from Bradyrhizobium diazoefficiens (strain JCM 10833 / BCRC 13528 / IAM 13628 / NBRC 14792 / USDA 110).